Here is a 318-residue protein sequence, read N- to C-terminus: 4-hydroxy-3-methylbut-2-enyl diphosphate reductase (318 aa).

Residue Cys12 participates in [4Fe-4S] cluster binding. Positions 41 and 74 each coordinate (2E)-4-hydroxy-3-methylbut-2-enyl diphosphate. 2 residues coordinate dimethylallyl diphosphate: His41 and His74. Residues His41 and His74 each coordinate isopentenyl diphosphate. Cys96 provides a ligand contact to [4Fe-4S] cluster. (2E)-4-hydroxy-3-methylbut-2-enyl diphosphate is bound at residue His124. His124 lines the dimethylallyl diphosphate pocket. Position 124 (His124) interacts with isopentenyl diphosphate. Glu126 functions as the Proton donor in the catalytic mechanism. Thr167 contacts (2E)-4-hydroxy-3-methylbut-2-enyl diphosphate. [4Fe-4S] cluster is bound at residue Cys197. (2E)-4-hydroxy-3-methylbut-2-enyl diphosphate is bound by residues Ser225, Ser226, Asn227, and Ser269. Residues Ser225, Ser226, Asn227, and Ser269 each coordinate dimethylallyl diphosphate. The isopentenyl diphosphate site is built by Ser225, Ser226, Asn227, and Ser269.

The protein belongs to the IspH family. The cofactor is [4Fe-4S] cluster.

It catalyses the reaction isopentenyl diphosphate + 2 oxidized [2Fe-2S]-[ferredoxin] + H2O = (2E)-4-hydroxy-3-methylbut-2-enyl diphosphate + 2 reduced [2Fe-2S]-[ferredoxin] + 2 H(+). The catalysed reaction is dimethylallyl diphosphate + 2 oxidized [2Fe-2S]-[ferredoxin] + H2O = (2E)-4-hydroxy-3-methylbut-2-enyl diphosphate + 2 reduced [2Fe-2S]-[ferredoxin] + 2 H(+). It functions in the pathway isoprenoid biosynthesis; dimethylallyl diphosphate biosynthesis; dimethylallyl diphosphate from (2E)-4-hydroxy-3-methylbutenyl diphosphate: step 1/1. It participates in isoprenoid biosynthesis; isopentenyl diphosphate biosynthesis via DXP pathway; isopentenyl diphosphate from 1-deoxy-D-xylulose 5-phosphate: step 6/6. Catalyzes the conversion of 1-hydroxy-2-methyl-2-(E)-butenyl 4-diphosphate (HMBPP) into a mixture of isopentenyl diphosphate (IPP) and dimethylallyl diphosphate (DMAPP). Acts in the terminal step of the DOXP/MEP pathway for isoprenoid precursor biosynthesis. This is 4-hydroxy-3-methylbut-2-enyl diphosphate reductase from Francisella tularensis subsp. holarctica (strain LVS).